The sequence spans 185 residues: Cytidylate kinase (185 aa).

G8–T16 provides a ligand contact to ATP.

It belongs to the cytidylate kinase family. Type 2 subfamily.

Its subcellular location is the cytoplasm. The enzyme catalyses CMP + ATP = CDP + ADP. It carries out the reaction dCMP + ATP = dCDP + ADP. The protein is Cytidylate kinase of Desulfurococcus amylolyticus (strain DSM 18924 / JCM 16383 / VKM B-2413 / 1221n) (Desulfurococcus kamchatkensis).